Reading from the N-terminus, the 264-residue chain is O-methyltransferase resE (264 aa).

S-adenosyl-L-methionine-binding residues include glutamine 97 and histidine 142.

This sequence belongs to the methyltransferase superfamily.

The catalysed reaction is desmethylrestrictinol + S-adenosyl-L-methionine = restrictinol + S-adenosyl-L-homocysteine + H(+). It functions in the pathway antifungal biosynthesis. O-methyltransferase; part of the gene cluster that mediates the biosynthesis of the tetrahydropyranyl antifungal agent restricticin that acts as an inhibitor of CYP51 and blocks the ergosterol biosynthesis. Within the pathway, resE uses S-adenosylmethionine to methylate position C4 of desmethylrestrictinol to produce restrictinol. The highly reducing polyketide synthase resH, the short chain dehydrogenase resG, the cyclase resF, the FAD-dependent monooxygenase resA and the enoylreductase resD are required to generate the first stable intermediate desmethylrestrictinol. ResH with resD biosynthesize the first polyketide chain intermediate that is reduced by resG, followed by epoxidation by resA before 6-endo cyclization via epoxide opening by resF leads to desmethylrestrictinol. The methyltransferase resE then catalyzes the C4 O-methylation of desmethylrestrictinol to produce restrictinol, and the nonribosomal peptide synthetase resC catalyzes the C3 esterification of restrictinol with glycine that leads to restricticin. The polypeptide is O-methyltransferase resE (Aspergillus sclerotiorum).